The primary structure comprises 118 residues: Co-chaperonin GroES (118 aa).

The protein belongs to the GroES chaperonin family. Heptamer of 7 subunits arranged in a ring. Interacts with the chaperonin GroEL.

The protein localises to the cytoplasm. In terms of biological role, together with the chaperonin GroEL, plays an essential role in assisting protein folding. The GroEL-GroES system forms a nano-cage that allows encapsulation of the non-native substrate proteins and provides a physical environment optimized to promote and accelerate protein folding. GroES binds to the apical surface of the GroEL ring, thereby capping the opening of the GroEL channel. This chain is Co-chaperonin GroES, found in Helicobacter pylori (strain P12).